A 139-amino-acid chain; its full sequence is Large ribosomal subunit protein bL17 (139 aa).

Belongs to the bacterial ribosomal protein bL17 family. In terms of assembly, part of the 50S ribosomal subunit. Contacts protein L32.

This Cereibacter sphaeroides (strain ATCC 17025 / ATH 2.4.3) (Rhodobacter sphaeroides) protein is Large ribosomal subunit protein bL17.